The following is a 544-amino-acid chain: Probable protein kinase UbiB (544 aa).

In terms of domain architecture, Protein kinase spans 123 to 500 (DFDEKALASA…RNKQRKSQYL (378 aa)). ATP-binding positions include 129 to 137 (LASASIAQV) and Lys-152. Catalysis depends on Asp-286, which acts as the Proton acceptor. Helical transmembrane passes span 499-519 (YLLG…ISAS) and 522-542 (MAIA…YKSG).

This sequence belongs to the ABC1 family. UbiB subfamily.

It is found in the cell inner membrane. It functions in the pathway cofactor biosynthesis; ubiquinone biosynthesis [regulation]. In terms of biological role, is probably a protein kinase regulator of UbiI activity which is involved in aerobic coenzyme Q (ubiquinone) biosynthesis. Required for the expression of 2'-N-acetyltransferase. In Providencia stuartii, this protein is Probable protein kinase UbiB.